Consider the following 622-residue polypeptide: MKIKAVAIFLSLLMIISLFSGCVENEKPIKEGSNDFKLIPVNSKSNFEEFKNTVENSIGNYIYVGHSYASREVQITSTVKSSNVETSTEPERFSKTNVQVKGVDEADILKTNGNIIAFSQNKIYLIKPLPPKYAKIIKNISECGYLYLTNNTLIVISWNKITSYNVSNPEMPKIIWQMDLNGSYVDSRLYNGTLYLVVRKNSIDCPIVWNNYKIGYDKYYIPELPPIYSMDFDTTYIISRINIKSGKVENSIAIVGNYKTTLYMSKNNLYFAYNLKINEKKLMLNFLNESADKYFPTEVADKIKRVIENEDFGDNAKFVEITETIERYLSSLPSEKRHNLMKKLQNDFENYLEEHWEEFEYTGIAKINLDSFEVKSGKVSGHLLNNFAMDEYNGYLRVATTIGDWRFRDKMTNNIYILDSDLNVVGKLTGLEKGERIYAVRFMGDKAYIVTYKETDPLLVIDLKNPKNPKVLGELKIPGYSTYLHPIGNNLFIGIGKDDDGKLKISLFNISDLNNPKEVDKYKLNVWWSPAFRDYHAFLWDEKYKIFFLPAYNHAYVFKVEDNKIEMVKDDEHKTNVLRALFINNYLYTFSLSEMHILDENNWQLVKKIEFENYLPYGYGFK.

The first 20 residues, 1-20 (MKIKAVAIFLSLLMIISLFS), serve as a signal peptide directing secretion.

This is an uncharacterized protein from Methanocaldococcus jannaschii (strain ATCC 43067 / DSM 2661 / JAL-1 / JCM 10045 / NBRC 100440) (Methanococcus jannaschii).